A 556-amino-acid polypeptide reads, in one-letter code: DNA ligase B (556 aa).

The N6-AMP-lysine intermediate role is filled by lysine 122.

The protein belongs to the NAD-dependent DNA ligase family. LigB subfamily.

The enzyme catalyses NAD(+) + (deoxyribonucleotide)n-3'-hydroxyl + 5'-phospho-(deoxyribonucleotide)m = (deoxyribonucleotide)n+m + AMP + beta-nicotinamide D-nucleotide.. Functionally, catalyzes the formation of phosphodiester linkages between 5'-phosphoryl and 3'-hydroxyl groups in double-stranded DNA using NAD as a coenzyme and as the energy source for the reaction. In Enterobacter sp. (strain 638), this protein is DNA ligase B.